The sequence spans 445 residues: Argininosuccinate synthase (445 aa).

ATP contacts are provided by residues 17–25 (AFSGGLDTS) and Ala43. Residue Tyr99 participates in L-citrulline binding. The ATP site is built by Gly129 and Thr131. L-aspartate contacts are provided by Thr131, Asn135, and Asp136. Position 135 (Asn135) interacts with L-citrulline. Asp136 contacts ATP. The L-citrulline site is built by Arg139 and Ser192. ATP is bound at residue Asp194. L-citrulline is bound by residues Thr201, Glu203, and Glu280.

Belongs to the argininosuccinate synthase family. Type 2 subfamily. Homotetramer.

Its subcellular location is the cytoplasm. It catalyses the reaction L-citrulline + L-aspartate + ATP = 2-(N(omega)-L-arginino)succinate + AMP + diphosphate + H(+). It functions in the pathway amino-acid biosynthesis; L-arginine biosynthesis; L-arginine from L-ornithine and carbamoyl phosphate: step 2/3. The protein is Argininosuccinate synthase of Acidobacterium capsulatum (strain ATCC 51196 / DSM 11244 / BCRC 80197 / JCM 7670 / NBRC 15755 / NCIMB 13165 / 161).